A 357-amino-acid polypeptide reads, in one-letter code: Protein-L-isoaspartate O-methyltransferase domain-containing protein 1 (357 aa).

The N-myristoyl glycine moiety is linked to residue Gly-2. Residue Ser-64 is part of the active site. AdoMet binding motif regions lie at residues Leu-85–Leu-94, Tyr-160–Tyr-164, and Leu-181–Ile-191. The BC-box stretch occupies residues Val-240–Tyr-250. The segment at Pro-299–Leu-333 is disordered. Positions Asp-301–Glu-317 are enriched in acidic residues. Over residues Lys-318–Leu-333 the composition is skewed to basic and acidic residues. Residues Leu-341–Pro-344 form a CUL-box region.

The protein belongs to the methyltransferase superfamily. L-isoaspartyl/D-aspartyl protein methyltransferase family. As to quaternary structure, component of the probable ECS(PCMTD1) E3 ubiquitin-protein ligase complex, at least composed of CUL5, ELOB, ELOC, RBX2 and PCMTD1. Interacts (via the BC-box) with ELOB and ELOC; the interaction is direct and stabilizes PCMTD1.

It localises to the cytoplasm. The protein localises to the membrane. Its function is as follows. Substrate recognition component of an ECS (Elongin BC-CUL5-SOCS-box protein) E3 ubiquitin ligase complex which mediates the ubiquitination and subsequent proteasomal degradation of target proteins. Specifically binds to the methyltransferase cofactor S-adenosylmethionine (AdoMet) via the N-terminal AdoMet binding motif, but does not display methyltransferase activity. May provide an alternate maintenance pathway for modified proteins by acting as a damage-specific E3 ubiquitin ligase adaptor protein. In Homo sapiens (Human), this protein is Protein-L-isoaspartate O-methyltransferase domain-containing protein 1.